The sequence spans 258 residues: Phosphate import ATP-binding protein PstB (258 aa).

Residues 5 to 247 form the ABC transporter domain; it reads LDLKDVNIYY…EKIFSNPTQK (243 aa). An ATP-binding site is contributed by 37–44; the sequence is GPSGCGKS.

The protein belongs to the ABC transporter superfamily. Phosphate importer (TC 3.A.1.7) family. The complex is composed of two ATP-binding proteins (PstB), two transmembrane proteins (PstC and PstA) and a solute-binding protein (PstS).

It is found in the cell membrane. It catalyses the reaction phosphate(out) + ATP + H2O = ADP + 2 phosphate(in) + H(+). Functionally, part of the ABC transporter complex PstSACB involved in phosphate import. Responsible for energy coupling to the transport system. The chain is Phosphate import ATP-binding protein PstB from Rhodococcus jostii (strain RHA1).